The chain runs to 211 residues: FMN-dependent NADH:quinone oxidoreductase (211 aa).

FMN contacts are provided by residues 17–19 (SNS), 102–105 (MWNL), and 146–149 (SRGG).

Belongs to the azoreductase type 1 family. Homodimer. The cofactor is FMN.

It carries out the reaction 2 a quinone + NADH + H(+) = 2 a 1,4-benzosemiquinone + NAD(+). The catalysed reaction is N,N-dimethyl-1,4-phenylenediamine + anthranilate + 2 NAD(+) = 2-(4-dimethylaminophenyl)diazenylbenzoate + 2 NADH + 2 H(+). Functionally, quinone reductase that provides resistance to thiol-specific stress caused by electrophilic quinones. In terms of biological role, also exhibits azoreductase activity. Catalyzes the reductive cleavage of the azo bond in aromatic azo compounds to the corresponding amines. This Macrococcus caseolyticus (strain JCSC5402) (Macrococcoides caseolyticum) protein is FMN-dependent NADH:quinone oxidoreductase.